Here is a 55-residue protein sequence, read N- to C-terminus: uncharacterized protein (55 aa).

Its subcellular location is the plastid. This is an uncharacterized protein from Cuscuta reflexa (Southern Asian dodder).